The following is an 88-amino-acid chain: MKYMIITVVILFTCALKMFCEETEEENHLAIPEDPYPSLPLRNYSCNNMACPLKHICGCMPTPITPETPFRDLDCGCYHEFDMMPVCV.

The N-terminal stretch at 1–20 (MKYMIITVVILFTCALKMFC) is a signal peptide.

It belongs to the scoloptoxin-12 family. In terms of processing, contains 3 disulfide bonds. In terms of tissue distribution, expressed by the venom gland.

The protein localises to the secreted. The chain is U-scoloptoxin(12)-Sa1a from Scolopendra alternans (Florida Keys giant centipede).